An 80-amino-acid polypeptide reads, in one-letter code: SPbeta prophage-derived uncharacterized HTH-type transcriptional regulator YotL (80 aa).

The HTH cro/C1-type domain occupies 12–67 (LNELMHEYSVSIEDLVECTGLSKQRINDYVGGFKSNMNIGTAMTFADAIGCSIEEL). A DNA-binding region (H-T-H motif) is located at residues 23 to 42 (IEDLVECTGLSKQRINDYVG).

This Bacillus subtilis (strain 168) protein is SPbeta prophage-derived uncharacterized HTH-type transcriptional regulator YotL (yotL).